Consider the following 166-residue polypeptide: Putative 4-hydroxy-4-methyl-2-oxoglutarate aldolase (166 aa).

Substrate is bound by residues glycine 74–isoleucine 77 and arginine 96. Residue aspartate 97 coordinates a divalent metal cation.

Belongs to the class II aldolase/RraA-like family. Homotrimer. It depends on a divalent metal cation as a cofactor.

It catalyses the reaction 4-hydroxy-4-methyl-2-oxoglutarate = 2 pyruvate. The enzyme catalyses oxaloacetate + H(+) = pyruvate + CO2. Functionally, catalyzes the aldol cleavage of 4-hydroxy-4-methyl-2-oxoglutarate (HMG) into 2 molecules of pyruvate. Also contains a secondary oxaloacetate (OAA) decarboxylase activity due to the common pyruvate enolate transition state formed following C-C bond cleavage in the retro-aldol and decarboxylation reactions. This is Putative 4-hydroxy-4-methyl-2-oxoglutarate aldolase from Xanthomonas axonopodis pv. citri (strain 306).